The sequence spans 251 residues: Cell division protein ZapD (251 aa).

Belongs to the ZapD family. In terms of assembly, interacts with FtsZ.

The protein resides in the cytoplasm. Functionally, cell division factor that enhances FtsZ-ring assembly. Directly interacts with FtsZ and promotes bundling of FtsZ protofilaments, with a reduction in FtsZ GTPase activity. The chain is Cell division protein ZapD from Burkholderia multivorans (strain ATCC 17616 / 249).